The following is a 422-amino-acid chain: Serine hydroxymethyltransferase (422 aa).

(6S)-5,6,7,8-tetrahydrofolate-binding positions include Leu-119 and 123–125; that span reads GHL. Lys-228 carries the N6-(pyridoxal phosphate)lysine modification. (6S)-5,6,7,8-tetrahydrofolate is bound by residues Glu-244 and 352–354; that span reads SPF.

Belongs to the SHMT family. In terms of assembly, homodimer. Pyridoxal 5'-phosphate serves as cofactor.

It is found in the cytoplasm. The enzyme catalyses (6R)-5,10-methylene-5,6,7,8-tetrahydrofolate + glycine + H2O = (6S)-5,6,7,8-tetrahydrofolate + L-serine. It participates in one-carbon metabolism; tetrahydrofolate interconversion. It functions in the pathway amino-acid biosynthesis; glycine biosynthesis; glycine from L-serine: step 1/1. Its function is as follows. Catalyzes the reversible interconversion of serine and glycine with tetrahydrofolate (THF) serving as the one-carbon carrier. This reaction serves as the major source of one-carbon groups required for the biosynthesis of purines, thymidylate, methionine, and other important biomolecules. Also exhibits THF-independent aldolase activity toward beta-hydroxyamino acids, producing glycine and aldehydes, via a retro-aldol mechanism. The polypeptide is Serine hydroxymethyltransferase (Magnetococcus marinus (strain ATCC BAA-1437 / JCM 17883 / MC-1)).